Consider the following 419-residue polypeptide: Carbohydrate sulfotransferase 12 (419 aa).

The Cytoplasmic segment spans residues 1–5; the sequence is MTKPR. The chain crosses the membrane as a helical; Signal-anchor for type II membrane protein span at residues 6-26; sequence LFRLWLVLGSALMILLIIVYW. Residues 27 to 419 lie on the Lumenal side of the membrane; sequence DNVGTAHFYL…YPKPENLLRD (393 aa). Over residues 78–87 the composition is skewed to basic and acidic residues; it reads HNDLSRRKTE. Residues 78 to 99 are disordered; it reads HNDLSRRKTEQPPVPAPSKPVL. N-linked (GlcNAc...) asparagine glycosylation occurs at Asn139. Position 176–182 (176–182) interacts with 3'-phosphoadenylyl sulfate; the sequence is PKVACTN. N-linked (GlcNAc...) asparagine glycosylation occurs at Asn214. A 3'-phosphoadenylyl sulfate-binding site is contributed by 250-258; that stretch reads RDPFVRLIS. N-linked (GlcNAc...) asparagine glycans are attached at residues Asn285 and Asn375.

It belongs to the sulfotransferase 2 family.

The protein resides in the golgi apparatus membrane. The enzyme catalyses chondroitin beta-D-glucuronate + n 3'-phosphoadenylyl sulfate = chondroitin 4'-sulfate + n adenosine 3',5'-bisphosphate + n H(+). Functionally, catalyzes the transfer of sulfate to position 4 of the N-acetylgalactosamine (GalNAc) residue of chondroitin and desulfated dermatan sulfate. Chondroitin sulfate constitutes the predominant proteoglycan present in cartilage and is distributed on the surfaces of many cells and extracellular matrices. Activity toward partially desulfated dermatan sulfate is however lower. Does not form 4, 6-di-O-sulfated GalNAc when chondroitin sulfate C is used as an acceptor. This Mus musculus (Mouse) protein is Carbohydrate sulfotransferase 12 (Chst12).